Consider the following 232-residue polypeptide: Syntaxin-51 (232 aa).

Topologically, residues 1 to 208 (MASSSDSWMR…NKNMRSGCSC (208 aa)) are cytoplasmic. The t-SNARE coiled-coil homology domain occupies 136 to 198 (RQVMREQDEG…RRVQKSLAVM (63 aa)). Residues 209-229 (MSMLLSVLGIVGLAVVIWMLV) form a helical; Anchor for type IV membrane protein membrane-spanning segment. The Vesicular portion of the chain corresponds to 230–232 (KYM).

This sequence belongs to the syntaxin family. In terms of assembly, interacts with VTI11 and either SYP21, or SYP22, or SYP61 in the prevacuolar compartment, or with VTI12 and SYP61 in the trans-Golgi network to form t-SNARE complexes. In terms of tissue distribution, expressed in root, leaf, stem, flower and silique.

The protein resides in the golgi apparatus. It is found in the trans-Golgi network membrane. Its subcellular location is the prevacuolar compartment membrane. In terms of biological role, vesicle trafficking protein that functions in the secretory pathway. This is Syntaxin-51 (SYP51) from Arabidopsis thaliana (Mouse-ear cress).